The sequence spans 751 residues: Catalase-peroxidase (751 aa).

Positions M1 to R24 are disordered. The segment at residues W95–Y241 is a cross-link (tryptophyl-tyrosyl-methioninium (Trp-Tyr) (with M-267)). H96 (proton acceptor) is an active-site residue. The tryptophyl-tyrosyl-methioninium (Tyr-Met) (with W-95) cross-link spans Y241–M267. A heme b-binding site is contributed by H282.

Belongs to the peroxidase family. Peroxidase/catalase subfamily. Homodimer or homotetramer. Heme b serves as cofactor. Formation of the three residue Trp-Tyr-Met cross-link is important for the catalase, but not the peroxidase activity of the enzyme.

The protein localises to the cytoplasm. The catalysed reaction is H2O2 + AH2 = A + 2 H2O. The enzyme catalyses 2 H2O2 = O2 + 2 H2O. In terms of biological role, bifunctional enzyme with both catalase and broad-spectrum peroxidase activity. The chain is Catalase-peroxidase from Aspergillus oryzae (strain ATCC 42149 / RIB 40) (Yellow koji mold).